We begin with the raw amino-acid sequence, 260 residues long: Sulfoquinovose 1-dehydrogenase (260 aa).

Residue tyrosine 160 is the Proton acceptor of the active site.

It belongs to the short-chain dehydrogenases/reductases (SDR) family.

It carries out the reaction 6-sulfo-D-quinovose + NAD(+) = 6-deoxy-6-sulfo-D-glucono-1,5-lactone + NADH + H(+). Functionally, catalyzes the oxidation of sulfoquinovose to 6-deoxy-6-sulfo-D-glucono-1,5-lactone, with a strong preference for NAD(+) as the electron acceptor. Is involved in a degradation pathway of sulfoquinovose (SQ) that allows P.putida SQ1 to use SQ as the sole carbon and energy source for growth. This chain is Sulfoquinovose 1-dehydrogenase, found in Pseudomonas putida (Arthrobacter siderocapsulatus).